The sequence spans 177 residues: Small ribosomal subunit protein uS4 (177 aa).

The 65-residue stretch at Arg104 to Glu168 folds into the S4 RNA-binding domain. The interval Pro157–Glu177 is disordered. Residues Ser165–Glu177 show a composition bias toward basic and acidic residues.

The protein belongs to the universal ribosomal protein uS4 family. Part of the 30S ribosomal subunit. Contacts protein S5. The interaction surface between S4 and S5 is involved in control of translational fidelity.

Its function is as follows. One of the primary rRNA binding proteins, it binds directly to 16S rRNA where it nucleates assembly of the body of the 30S subunit. Functionally, with S5 and S12 plays an important role in translational accuracy. In Methanococcus aeolicus (strain ATCC BAA-1280 / DSM 17508 / OCM 812 / Nankai-3), this protein is Small ribosomal subunit protein uS4.